A 126-amino-acid chain; its full sequence is Large ribosomal subunit protein bL12 (126 aa).

This sequence belongs to the bacterial ribosomal protein bL12 family. Homodimer. Part of the ribosomal stalk of the 50S ribosomal subunit. Forms a multimeric L10(L12)X complex, where L10 forms an elongated spine to which 2 to 4 L12 dimers bind in a sequential fashion. Binds GTP-bound translation factors.

Functionally, forms part of the ribosomal stalk which helps the ribosome interact with GTP-bound translation factors. Is thus essential for accurate translation. In Elusimicrobium minutum (strain Pei191), this protein is Large ribosomal subunit protein bL12.